Here is a 274-residue protein sequence, read N- to C-terminus: Nitrogenase iron protein (274 aa).

8-15 (GKGGIGKS) is an ATP binding site. Cysteine 94 is a [4Fe-4S] cluster binding site. The residue at position 97 (arginine 97) is an ADP-ribosylarginine; by dinitrogenase reductase ADP-ribosyltransferase. A [4Fe-4S] cluster-binding site is contributed by cysteine 131.

It belongs to the NifH/BchL/ChlL family. In terms of assembly, homodimer. [4Fe-4S] cluster is required as a cofactor. The reversible ADP-ribosylation of Arg-97 inactivates the nitrogenase reductase and regulates nitrogenase activity.

It carries out the reaction N2 + 8 reduced [2Fe-2S]-[ferredoxin] + 16 ATP + 16 H2O = H2 + 8 oxidized [2Fe-2S]-[ferredoxin] + 2 NH4(+) + 16 ADP + 16 phosphate + 6 H(+). Functionally, the key enzymatic reactions in nitrogen fixation are catalyzed by the nitrogenase complex, which has 2 components: the iron protein and the molybdenum-iron protein. This Desulfatibacillum aliphaticivorans protein is Nitrogenase iron protein.